A 485-amino-acid polypeptide reads, in one-letter code: Zinc finger protein 577 (485 aa).

Positions 1-21 are disordered; sequence MKNATIVMSVRREQGSSSGEG. The KRAB domain maps to 23–94; it reads LSFEDVAVGF…EGAAHSQICP (72 aa). The C2H2-type 1; degenerate zinc-finger motif lies at 158-180; the sequence is HECSVCGRAFSRKAQLIQHQRTE. C2H2-type zinc fingers lie at residues 186-208, 214-236, 242-264, 270-292, 298-320, 326-348, and 354-376; these read HGCG…QRTH, HECS…QRTH, YRCS…QRSH, YGCS…QRLH, YKCS…QRIH, YECS…QRTH, and YSCR…EKTH.

This sequence belongs to the krueppel C2H2-type zinc-finger protein family.

It is found in the nucleus. Its function is as follows. May be involved in transcriptional regulation. This is Zinc finger protein 577 (ZNF577) from Homo sapiens (Human).